Consider the following 222-residue polypeptide: N-acetyltransferase 8F1 (222 aa).

The helical transmembrane segment at 53–73 (LVLVSGSWILAVICIFFLLLL) threads the bilayer. Positions 69 to 220 (FLLLLLRLLA…CTIQLKYSFP (152 aa)) constitute an N-acetyltransferase domain.

It belongs to the camello family.

The protein resides in the membrane. Its function is as follows. May play a role in regulation of gastrulation. The chain is N-acetyltransferase 8F1 from Mus musculus (Mouse).